Reading from the N-terminus, the 124-residue chain is Large ribosomal subunit protein eL31 (124 aa).

The protein belongs to the eukaryotic ribosomal protein eL31 family. As to quaternary structure, component of the large ribosomal subunit.

The protein localises to the cytoplasm. Its function is as follows. Component of the large ribosomal subunit. The ribosome is a large ribonucleoprotein complex responsible for the synthesis of proteins in the cell. The sequence is that of Large ribosomal subunit protein eL31 (rpl31) from Paralichthys olivaceus (Bastard halibut).